Here is a 339-residue protein sequence, read N- to C-terminus: NADP-dependent dehydrogenase M3 (339 aa).

NADP(+) contacts are provided by Ser49, Ile51, Asp93, Tyr206, Lys210, Ile240, and Gln244. Tyr206 serves as the catalytic Proton acceptor. Lys210 serves as the catalytic Lowers pKa of active site Tyr.

It belongs to the short-chain dehydrogenases/reductases (SDR) family. Homodimer.

Its subcellular location is the cytoplasm. It is found in the cytosol. The protein operates within secondary metabolite biosynthesis. NADP-dependent dehydrogenase; part of the gene cluster that mediates the biosynthesis of squalestatin S1 (SQS1, also known as zaragozic acid A), a heavily oxidized fungal polyketide that offers potent cholesterol lowering activity by targeting squalene synthase (SS). SQS1 is composed of a 2,8-dioxobicyclic[3.2.1]octane-3,4,5-tricarboxyclic acid core that is connected to two lipophilic polyketide arms. These initial steps feature the priming of an unusual benzoic acid starter unit onto the highly reducing polyketide synthase pks2, followed by oxaloacetate extension and product release to generate a tricarboxylic acid containing product. The phenylalanine ammonia lyase (PAL) M7 and the acyl-CoA ligase M9 are involved in transforming phenylalanine into benzoyl-CoA. The citrate synthase-like protein R3 is involved in connecting the C-alpha-carbons of the hexaketide chain and oxaloacetate to afford the tricarboxylic acid unit. The potential hydrolytic enzymes, M8 and M10, are in close proximity to pks2 and may participate in product release. On the other side, the tetraketide arm is synthesized by a the squalestatin tetraketide synthase pks1 and enzymatically esterified to the core in the last biosynthetic step, by the acetyltransferase M4. The biosynthesis of the tetraketide must involve 3 rounds of chain extension. After the first and second rounds methyl-transfer occurs, and in all rounds of extension the ketoreductase and dehydratase are active. The enoyl reductase and C-MeT of pks1 are not active in the final round of extension. The acetyltransferase M4 appears to have a broad substrate selectivity for its acyl CoA substrate, allowing the in vitro synthesis of novel squalestatins. The biosynthesis of SQS1 requires several oxidative steps likely performed by oxidoreductases M1, R1 and R2. Finally, in support of the identification of the cluster as being responsible for SQS1 production, the cluster contains a gene encoding a putative squalene synthase (SS) R6, suggesting a likely mechanism for self-resistance. The chain is NADP-dependent dehydrogenase M3 from Phoma sp. (strain ATCC 20986 / MF5453).